Reading from the N-terminus, the 745-residue chain is Phosphate transporter PHO1 homolog 4 (745 aa).

The SPX domain occupies 1–290 (MRFGKEFVSQ…KRNAAKLYME (290 aa)). The Cytoplasmic segment spans residues 1 to 342 (MRFGKEFVSQ…KINKERHLIT (342 aa)). The chain crosses the membrane as a helical span at residues 343 to 363 (FSTGFFFGCGISLIVALGLII). The Extracellular portion of the chain corresponds to 364 to 383 (HARNIMGTPGQRTYMETMFP). Residues 384–404 (LYRFFGFVVLHMDVYAANIYF) traverse the membrane as a helical segment. The Cytoplasmic portion of the chain corresponds to 405–427 (WRRYRVNYSFIFGFKQGTELGYR). The chain crosses the membrane as a helical span at residues 428-448 (HVLLLSFGLGTLSLCAVLLNL). Residues 449–464 (DMEMDAQTKDYRLVTE) are Extracellular-facing. Residues 465–485 (LIPLFLLVLVIIIVLCPFNIL) traverse the membrane as a helical segment. Residues 486 to 615 (YRSSRFFFLS…YTLNRGSNWN (130 aa)) are Cytoplasmic-facing. The 195-residue stretch at 550-744 (TSNIGFRTFY…NYEEDGDHHN (195 aa)) folds into the EXS domain. The chain crosses the membrane as a helical span at residues 616–636 (ITAWVFSGVATFYGTYWDIVL). Residues 637-660 (DWGLLQRGCKNSFLRDKLLVPHKT) lie on the Extracellular side of the membrane. The helical transmembrane segment at 661–681 (VYYAAMVLNVLLRLVWLQTVL) threads the bilayer. The Cytoplasmic segment spans residues 682-745 (DLKFSFLHRE…YEEDGDHHNN (64 aa)).

This sequence belongs to the SYG1 (TC 2.A.94) family. In terms of tissue distribution, expressed in root epidermis and cortex, leaf hydathodes, pollen grains and stigma apex.

The protein localises to the cell membrane. Its function is as follows. May transport inorganic phosphate (Pi). The polypeptide is Phosphate transporter PHO1 homolog 4 (PHO1-H4) (Arabidopsis thaliana (Mouse-ear cress)).